A 713-amino-acid polypeptide reads, in one-letter code: Nuclear poly(A) polymerase 1 (713 aa).

ATP is bound by residues 91-93, 103-106, D159, Y229, and 238-239; these read FGS, ADID, and GI. Mg(2+) is bound by residues D104, D106, and D159. The tract at residues 480 to 555 is disordered; that stretch reads FVFPGGVRPS…TLTDQPRNSK (76 aa). The segment covering 507–526 has biased composition (low complexity); that stretch reads SSTSSAPAATTTTTEMSSES.

It belongs to the poly(A) polymerase family. In terms of assembly, monomer. Forms a complex with cleavage and polyadenylation specificity factor (CPSF) subunit PAPS4. The cofactor is Mg(2+). It depends on Mn(2+) as a cofactor. In terms of tissue distribution, expressed in stems, cotyledons, hypocotyls, radicle, leaves, and, to a lower extent, in roots (including primary and secondary roots as well as root tips) and flowers. In radicle, roots and leaves, mainly present in vascular tissues.

The protein localises to the nucleus. The catalysed reaction is RNA(n) + ATP = RNA(n)-3'-adenine ribonucleotide + diphosphate. In terms of biological role, essential protein. Polymerase that creates the 3'-poly(A) tail of mRNA's. Also required for the endoribonucleolytic cleavage reaction at some polyadenylation sites. May acquire specificity through interaction with a cleavage and polyadenylation specificity factor (CPSF) at its C-terminus. This chain is Nuclear poly(A) polymerase 1, found in Arabidopsis thaliana (Mouse-ear cress).